A 115-amino-acid polypeptide reads, in one-letter code: Large ribosomal subunit protein P2y (115 aa).

Residues 63–115 are disordered; sequence ASVPSGGGGGVAVASATSGGGGGGGASAAESKKEEKKEEKEESDDDMGFSLFE. Basic and acidic residues predominate over residues 92-102; sequence ESKKEEKKEEK. Residue serine 105 is modified to Phosphoserine.

The protein belongs to the eukaryotic ribosomal protein P1/P2 family. P1 and P2 exist as dimers at the large ribosomal subunit. In terms of processing, phosphorylated.

Its function is as follows. Plays an important role in the elongation step of protein synthesis. This Arabidopsis thaliana (Mouse-ear cress) protein is Large ribosomal subunit protein P2y (RPP2B).